The primary structure comprises 851 residues: Periplasmic nitrate reductase (851 aa).

Residues 1–29 (MQSNRRDFLKAQALAASAAAAGIPIVVEA) constitute a signal peptide (tat-type signal). Residues 44-100 (VRWDKAPCRFCGTGCAVMVGVQEGKVVATQGDPEAPVNRGLNCIKGYFLSKIMYGRD) form the 4Fe-4S Mo/W bis-MGD-type domain. Positions 51, 54, 58, and 86 each coordinate [4Fe-4S] cluster. Mo-bis(molybdopterin guanine dinucleotide) is bound by residues K88, Q155, N180, C184, 217–224 (WGSNMAEM), 248–252 (STYEH), and 267–269 (QTD). The tract at residues 317-338 (DATSNGYPGADGKPKGNPNDST) is disordered. Mo-bis(molybdopterin guanine dinucleotide)-binding positions include M388, Q392, N498, 524-525 (SD), K547, D574, and 741-750 (TGRVLEHWHT). F817 is a binding site for substrate. Positions 825 and 842 each coordinate Mo-bis(molybdopterin guanine dinucleotide).

Belongs to the prokaryotic molybdopterin-containing oxidoreductase family. NasA/NapA/NarB subfamily. In terms of assembly, component of the periplasmic nitrate reductase NapAB complex composed of NapA and NapB. The cofactor is [4Fe-4S] cluster. Mo-bis(molybdopterin guanine dinucleotide) serves as cofactor. Post-translationally, predicted to be exported by the Tat system. The position of the signal peptide cleavage has not been experimentally proven.

It is found in the periplasm. The enzyme catalyses 2 Fe(II)-[cytochrome] + nitrate + 2 H(+) = 2 Fe(III)-[cytochrome] + nitrite + H2O. Its function is as follows. Catalytic subunit of the periplasmic nitrate reductase complex NapAB. Receives electrons from NapB and catalyzes the reduction of nitrate to nitrite. The polypeptide is Periplasmic nitrate reductase (Leptothrix cholodnii (strain ATCC 51168 / LMG 8142 / SP-6) (Leptothrix discophora (strain SP-6))).